Reading from the N-terminus, the 419-residue chain is Tyrosine--tRNA ligase (419 aa).

Tyr42 contacts L-tyrosine. The short motif at 47-56 is the 'HIGH' region element; that stretch reads CTAPSLHVGS. Tyr179 and Gln183 together coordinate L-tyrosine. The 'KMSKS' region motif lies at 239 to 243; it reads KMGKT. Position 242 (Lys242) interacts with ATP. The S4 RNA-binding domain occupies 353-419; it reads LGVLAAFVKA…RKRHVLLKLV (67 aa).

Belongs to the class-I aminoacyl-tRNA synthetase family. TyrS type 1 subfamily. Homodimer.

The protein localises to the cytoplasm. The enzyme catalyses tRNA(Tyr) + L-tyrosine + ATP = L-tyrosyl-tRNA(Tyr) + AMP + diphosphate + H(+). Catalyzes the attachment of tyrosine to tRNA(Tyr) in a two-step reaction: tyrosine is first activated by ATP to form Tyr-AMP and then transferred to the acceptor end of tRNA(Tyr). This Methylocella silvestris (strain DSM 15510 / CIP 108128 / LMG 27833 / NCIMB 13906 / BL2) protein is Tyrosine--tRNA ligase.